Consider the following 450-residue polypeptide: UDP-N-acetylmuramoylalanine--D-glutamate ligase (450 aa).

Residue 119–125 (GSNGKTT) participates in ATP binding.

Belongs to the MurCDEF family.

Its subcellular location is the cytoplasm. It carries out the reaction UDP-N-acetyl-alpha-D-muramoyl-L-alanine + D-glutamate + ATP = UDP-N-acetyl-alpha-D-muramoyl-L-alanyl-D-glutamate + ADP + phosphate + H(+). Its pathway is cell wall biogenesis; peptidoglycan biosynthesis. Cell wall formation. Catalyzes the addition of glutamate to the nucleotide precursor UDP-N-acetylmuramoyl-L-alanine (UMA). This Streptococcus pneumoniae (strain ATCC 700669 / Spain 23F-1) protein is UDP-N-acetylmuramoylalanine--D-glutamate ligase.